Consider the following 95-residue polypeptide: Aspartyl/glutamyl-tRNA(Asn/Gln) amidotransferase subunit C (95 aa).

The protein belongs to the GatC family. Heterotrimer of A, B and C subunits.

It carries out the reaction L-glutamyl-tRNA(Gln) + L-glutamine + ATP + H2O = L-glutaminyl-tRNA(Gln) + L-glutamate + ADP + phosphate + H(+). The enzyme catalyses L-aspartyl-tRNA(Asn) + L-glutamine + ATP + H2O = L-asparaginyl-tRNA(Asn) + L-glutamate + ADP + phosphate + 2 H(+). Functionally, allows the formation of correctly charged Asn-tRNA(Asn) or Gln-tRNA(Gln) through the transamidation of misacylated Asp-tRNA(Asn) or Glu-tRNA(Gln) in organisms which lack either or both of asparaginyl-tRNA or glutaminyl-tRNA synthetases. The reaction takes place in the presence of glutamine and ATP through an activated phospho-Asp-tRNA(Asn) or phospho-Glu-tRNA(Gln). This chain is Aspartyl/glutamyl-tRNA(Asn/Gln) amidotransferase subunit C, found in Paracoccus denitrificans (strain Pd 1222).